Consider the following 410-residue polypeptide: Cysteine desulfurase IscS (410 aa).

Pyridoxal 5'-phosphate contacts are provided by residues 80 to 81, asparagine 160, glutamine 188, and 208 to 210; these read AT and SGH. The residue at position 211 (lysine 211) is an N6-(pyridoxal phosphate)lysine. Threonine 248 is a binding site for pyridoxal 5'-phosphate. The Cysteine persulfide intermediate role is filled by cysteine 334. Cysteine 334 is a [2Fe-2S] cluster binding site.

It belongs to the class-V pyridoxal-phosphate-dependent aminotransferase family. NifS/IscS subfamily. As to quaternary structure, homodimer. Forms a heterotetramer with IscU, interacts with other sulfur acceptors. Pyridoxal 5'-phosphate serves as cofactor.

The protein localises to the cytoplasm. It carries out the reaction (sulfur carrier)-H + L-cysteine = (sulfur carrier)-SH + L-alanine. It participates in cofactor biosynthesis; iron-sulfur cluster biosynthesis. In terms of biological role, master enzyme that delivers sulfur to a number of partners involved in Fe-S cluster assembly, tRNA modification or cofactor biosynthesis. Catalyzes the removal of elemental sulfur atoms from cysteine to produce alanine. Functions as a sulfur delivery protein for Fe-S cluster synthesis onto IscU, an Fe-S scaffold assembly protein, as well as other S acceptor proteins. This Rickettsia conorii (strain ATCC VR-613 / Malish 7) protein is Cysteine desulfurase IscS.